A 331-amino-acid polypeptide reads, in one-letter code: Ribosomal RNA small subunit methyltransferase H (331 aa).

S-adenosyl-L-methionine is bound by residues 49 to 51 (GGH), D68, L102, D116, and Q123.

It belongs to the methyltransferase superfamily. RsmH family.

The protein resides in the cytoplasm. It catalyses the reaction cytidine(1402) in 16S rRNA + S-adenosyl-L-methionine = N(4)-methylcytidine(1402) in 16S rRNA + S-adenosyl-L-homocysteine + H(+). Functionally, specifically methylates the N4 position of cytidine in position 1402 (C1402) of 16S rRNA. The protein is Ribosomal RNA small subunit methyltransferase H of Renibacterium salmoninarum (strain ATCC 33209 / DSM 20767 / JCM 11484 / NBRC 15589 / NCIMB 2235).